The sequence spans 422 residues: Serine hydroxymethyltransferase (422 aa).

(6S)-5,6,7,8-tetrahydrofolate-binding positions include Leu118 and 122–124 (GHL). Residue Lys227 is modified to N6-(pyridoxal phosphate)lysine. Residues Glu243 and 351-353 (SPF) contribute to the (6S)-5,6,7,8-tetrahydrofolate site.

It belongs to the SHMT family. As to quaternary structure, homodimer. Pyridoxal 5'-phosphate serves as cofactor.

Its subcellular location is the cytoplasm. The enzyme catalyses (6R)-5,10-methylene-5,6,7,8-tetrahydrofolate + glycine + H2O = (6S)-5,6,7,8-tetrahydrofolate + L-serine. Its pathway is one-carbon metabolism; tetrahydrofolate interconversion. The protein operates within amino-acid biosynthesis; glycine biosynthesis; glycine from L-serine: step 1/1. In terms of biological role, catalyzes the reversible interconversion of serine and glycine with tetrahydrofolate (THF) serving as the one-carbon carrier. This reaction serves as the major source of one-carbon groups required for the biosynthesis of purines, thymidylate, methionine, and other important biomolecules. Also exhibits THF-independent aldolase activity toward beta-hydroxyamino acids, producing glycine and aldehydes, via a retro-aldol mechanism. The sequence is that of Serine hydroxymethyltransferase from Kosmotoga olearia (strain ATCC BAA-1733 / DSM 21960 / TBF 19.5.1).